A 140-amino-acid polypeptide reads, in one-letter code: Large ribosomal subunit protein uL11 (140 aa).

This sequence belongs to the universal ribosomal protein uL11 family. In terms of assembly, part of the ribosomal stalk of the 50S ribosomal subunit. Interacts with L10 and the large rRNA to form the base of the stalk. L10 forms an elongated spine to which L12 dimers bind in a sequential fashion forming a multimeric L10(L12)X complex. One or more lysine residues are methylated.

Functionally, forms part of the ribosomal stalk which helps the ribosome interact with GTP-bound translation factors. The polypeptide is Large ribosomal subunit protein uL11 (Staphylococcus epidermidis (strain ATCC 35984 / DSM 28319 / BCRC 17069 / CCUG 31568 / BM 3577 / RP62A)).